The chain runs to 371 residues: Chaperone protein DnaJ (371 aa).

A J domain is found at Asp-4 to Gly-68. The segment at Gly-134–Gln-212 adopts a CR-type zinc-finger fold. The Zn(2+) site is built by Cys-147, Cys-150, Cys-164, Cys-167, Cys-186, Cys-189, Cys-200, and Cys-203. 4 CXXCXGXG motif repeats span residues Cys-147–Gly-154, Cys-164–Gly-171, Cys-186–Gly-193, and Cys-200–Gly-207.

Belongs to the DnaJ family. In terms of assembly, homodimer. Zn(2+) serves as cofactor.

The protein localises to the cytoplasm. Participates actively in the response to hyperosmotic and heat shock by preventing the aggregation of stress-denatured proteins and by disaggregating proteins, also in an autonomous, DnaK-independent fashion. Unfolded proteins bind initially to DnaJ; upon interaction with the DnaJ-bound protein, DnaK hydrolyzes its bound ATP, resulting in the formation of a stable complex. GrpE releases ADP from DnaK; ATP binding to DnaK triggers the release of the substrate protein, thus completing the reaction cycle. Several rounds of ATP-dependent interactions between DnaJ, DnaK and GrpE are required for fully efficient folding. Also involved, together with DnaK and GrpE, in the DNA replication of plasmids through activation of initiation proteins. The protein is Chaperone protein DnaJ of Rickettsia felis (strain ATCC VR-1525 / URRWXCal2) (Rickettsia azadi).